The sequence spans 426 residues: Serine--tRNA ligase (426 aa).

Residues 37–63 form a disordered region; the sequence is RKSVQTRTEQLQAERNARSKSIGQAKA. 233–235 lines the L-serine pocket; it reads TAE. Residue 264-266 participates in ATP binding; sequence RSE. E287 is a binding site for L-serine. An ATP-binding site is contributed by 351–354; sequence EISS. S387 contacts L-serine.

It belongs to the class-II aminoacyl-tRNA synthetase family. Type-1 seryl-tRNA synthetase subfamily. As to quaternary structure, homodimer. The tRNA molecule binds across the dimer.

The protein localises to the cytoplasm. It carries out the reaction tRNA(Ser) + L-serine + ATP = L-seryl-tRNA(Ser) + AMP + diphosphate + H(+). It catalyses the reaction tRNA(Sec) + L-serine + ATP = L-seryl-tRNA(Sec) + AMP + diphosphate + H(+). It functions in the pathway aminoacyl-tRNA biosynthesis; selenocysteinyl-tRNA(Sec) biosynthesis; L-seryl-tRNA(Sec) from L-serine and tRNA(Sec): step 1/1. Functionally, catalyzes the attachment of serine to tRNA(Ser). Is also able to aminoacylate tRNA(Sec) with serine, to form the misacylated tRNA L-seryl-tRNA(Sec), which will be further converted into selenocysteinyl-tRNA(Sec). This Pseudomonas entomophila (strain L48) protein is Serine--tRNA ligase.